The sequence spans 1225 residues: Cohesin subunit SA-3 (1225 aa).

The disordered stretch occupies residues 1-97 (MSSPLQRAVG…HSRKQSEPPA (97 aa)). A compositionally biased stretch (low complexity) spans 15-26 (ALSASSSSSASL). A compositionally biased stretch (acidic residues) spans 45–54 (LADEDTDFED). Composition is skewed to basic residues over residues 59–69 (NVKKRAAKRPP) and 76–90 (KHPKKGSRVVHRHSR). The SCD domain maps to 309-394 (FVHRYRDVLP…SRFKDRMVSM (86 aa)). Disordered stretches follow at residues 546–567 (SEGHPPVGRVTGRKGLTSKERK), 1063–1113 (AETS…STAV), and 1177–1225 (EEDE…IEDF). Residues 1078–1089 (VEGPAKPNREDV) are compositionally biased toward basic and acidic residues. Over residues 1090–1099 (SSSQEESLQL) the composition is skewed to low complexity. Positions 1177-1191 (EEDEEEELEIQDESN) are enriched in acidic residues. Polar residues predominate over residues 1198 to 1209 (DMQASSYSSTSE). The residue at position 1203 (Ser1203) is a Phosphoserine. The span at 1216–1225 (DSTELDIEDF) shows a compositional bias: acidic residues.

The protein belongs to the SCC3 family. In terms of assembly, component of the meiosis-specific cohesin complex, which also contains the SMC1 (SMC1A or SMC1B) and SMC3 heterodimer. Such complex likely contains RAD21, or the meiosis-specific related protein REC8. Interacts with CCDC79/TERB1; recruiting cohesin to telomeres to develop structural rigidity. Post-translationally, phosphorylated. In terms of tissue distribution, testis specific.

The protein resides in the nucleus. Its subcellular location is the chromosome. It localises to the centromere. Functionally, meiosis specific component of cohesin complex. The cohesin complex is required for the cohesion of sister chromatids after DNA replication. The cohesin complex apparently forms a large proteinaceous ring within which sister chromatids can be trapped. At anaphase, the complex is cleaved and dissociates from chromatin, allowing sister chromatids to segregate. The meiosis-specific cohesin complex probably replaces mitosis specific cohesin complex when it dissociates from chromatin during prophase I. The protein is Cohesin subunit SA-3 (STAG3) of Homo sapiens (Human).